Reading from the N-terminus, the 310-residue chain is tRNA dimethylallyltransferase (310 aa).

13 to 20 (GPTASGKT) contributes to the ATP binding site. 15–20 (TASGKT) serves as a coordination point for substrate. Interaction with substrate tRNA regions lie at residues 38 to 41 (DSAL), 162 to 166 (QRLSR), 243 to 248 (RCVGYR), and 276 to 283 (KRQITWLR).

This sequence belongs to the IPP transferase family. As to quaternary structure, monomer. Mg(2+) serves as cofactor.

It catalyses the reaction adenosine(37) in tRNA + dimethylallyl diphosphate = N(6)-dimethylallyladenosine(37) in tRNA + diphosphate. Its function is as follows. Catalyzes the transfer of a dimethylallyl group onto the adenine at position 37 in tRNAs that read codons beginning with uridine, leading to the formation of N6-(dimethylallyl)adenosine (i(6)A). The protein is tRNA dimethylallyltransferase of Aliivibrio fischeri (strain ATCC 700601 / ES114) (Vibrio fischeri).